Reading from the N-terminus, the 232-residue chain is Large ribosomal subunit protein uL10c (232 aa).

The N-terminal 52 residues, 1-52, are a transit peptide targeting the chloroplast; the sequence is MESTLFLSKPLPTTIKTTTHSLSSVYPNPFKPNNLTFPRTTHKHPTTTTITA.

Belongs to the universal ribosomal protein uL10 family. Component of the chloroplast large ribosomal subunit (LSU). Mature 70S chloroplast ribosomes of higher plants consist of a small (30S) and a large (50S) subunit. The 30S small subunit contains 1 molecule of ribosomal RNA (16S rRNA) and 24 different proteins. The 50S large subunit contains 3 rRNA molecules (23S, 5S and 4.5S rRNA) and 33 different proteins.

It is found in the plastid. It localises to the chloroplast. In terms of biological role, component of the chloroplast ribosome (chloro-ribosome), a dedicated translation machinery responsible for the synthesis of chloroplast genome-encoded proteins, including proteins of the transcription and translation machinery and components of the photosynthetic apparatus. The sequence is that of Large ribosomal subunit protein uL10c (RPL10) from Spinacia oleracea (Spinach).